The chain runs to 708 residues: Polyribonucleotide nucleotidyltransferase (708 aa).

2 residues coordinate Mg(2+): D487 and D493. The KH domain maps to 554 to 613 (PRIHTMKISADKIKDVIGKGGAVIRALTEETGTTIEIEDDGTIKIAATEGAAAKEAIRRI). Residues 623-691 (GVIYTGKVAR…RQGRVRLSMK (69 aa)) enclose the S1 motif domain.

Belongs to the polyribonucleotide nucleotidyltransferase family. In terms of assembly, component of the RNA degradosome, which is a multiprotein complex involved in RNA processing and mRNA degradation. Mg(2+) serves as cofactor.

The protein localises to the cytoplasm. It catalyses the reaction RNA(n+1) + phosphate = RNA(n) + a ribonucleoside 5'-diphosphate. Functionally, involved in mRNA degradation. Catalyzes the phosphorolysis of single-stranded polyribonucleotides processively in the 3'- to 5'-direction. The protein is Polyribonucleotide nucleotidyltransferase of Vibrio vulnificus (strain CMCP6).